Reading from the N-terminus, the 499-residue chain is Glucosylglycerol-phosphate synthase (499 aa).

Belongs to the glycosyltransferase 20 family. In terms of assembly, interacts with GGP-P. In terms of processing, seems to be degraded, at least in vitro, by FtsH2. In an ftsH2 disruption strain inactive GGPS accumulates.

The protein localises to the cytoplasm. The enzyme catalyses ADP-alpha-D-glucose + sn-glycerol 3-phosphate = 2-O-(alpha-D-glucopyranosyl)-sn-glycerol 3-phosphate + ADP + H(+). The protein operates within glycan metabolism; glucosylglycerol biosynthesis. Its function is as follows. Involved in salt tolerance by producing GG-phosphate from ADP-glucose and glycerol-3-phosphate (G3P), an intermediate in the synthesis of the osmolyte glucosylglycerol (GG). The chain is Glucosylglycerol-phosphate synthase (ggpS) from Synechocystis sp. (strain ATCC 27184 / PCC 6803 / Kazusa).